Consider the following 122-residue polypeptide: Large ribosomal subunit protein uL14 (122 aa).

This sequence belongs to the universal ribosomal protein uL14 family. Part of the 50S ribosomal subunit. Forms a cluster with proteins L3 and L19. In the 70S ribosome, L14 and L19 interact and together make contacts with the 16S rRNA in bridges B5 and B8.

Functionally, binds to 23S rRNA. Forms part of two intersubunit bridges in the 70S ribosome. The polypeptide is Large ribosomal subunit protein uL14 (Burkholderia vietnamiensis (strain G4 / LMG 22486) (Burkholderia cepacia (strain R1808))).